The primary structure comprises 375 residues: Alcohol dehydrogenase 6 (375 aa).

Phosphoserine is present on Ser-23. Zn(2+) contacts are provided by Cys-47, His-69, Cys-99, Cys-102, Cys-105, Cys-113, and Cys-175. NAD(+)-binding positions include 200–205 (GLGGVG), Asp-224, Lys-229, 293–295 (VGL), and Arg-370.

It belongs to the zinc-containing alcohol dehydrogenase family. Class-V subfamily. In terms of assembly, dimer. It depends on Zn(2+) as a cofactor.

It localises to the cytoplasm. The enzyme catalyses a primary alcohol + NAD(+) = an aldehyde + NADH + H(+). The catalysed reaction is a secondary alcohol + NAD(+) = a ketone + NADH + H(+). Its function is as follows. Alcohol dehydrogenase. Catalyzes the NAD-dependent oxidation of primary alcohols to the corresponding aldehydes. Oxidizes secondary alcohols to the corresponding ketones. This chain is Alcohol dehydrogenase 6 (ADH6), found in Pongo abelii (Sumatran orangutan).